The chain runs to 253 residues: Indole-3-glycerol phosphate synthase (253 aa).

It belongs to the TrpC family.

It catalyses the reaction 1-(2-carboxyphenylamino)-1-deoxy-D-ribulose 5-phosphate + H(+) = (1S,2R)-1-C-(indol-3-yl)glycerol 3-phosphate + CO2 + H2O. Its pathway is amino-acid biosynthesis; L-tryptophan biosynthesis; L-tryptophan from chorismate: step 4/5. This is Indole-3-glycerol phosphate synthase from Bacillus cereus (strain ATCC 14579 / DSM 31 / CCUG 7414 / JCM 2152 / NBRC 15305 / NCIMB 9373 / NCTC 2599 / NRRL B-3711).